A 625-amino-acid polypeptide reads, in one-letter code: Probable inactive receptor kinase At5g16590 (625 aa).

An N-terminal signal peptide occupies residues 1–23 (MKNKTNLGLSVFFFFICLVSVTS). 5 LRR repeats span residues 88–111 (KLET…ANLT), 112–134 (LLRY…LFTL), 136–158 (NIIR…VNSA), 160–182 (RLAT…KIKL), and 183–204 (QQFN…SGMP). Residues 246-266 (AIVGIVIGCFVLLLVLFLIVF) traverse the membrane as a helical segment. The Protein kinase domain maps to 343-613 (KASAEVLGKG…PEVTRLIEEV (271 aa)). S345 carries the phosphoserine modification. Residues 349–357 (LGKGTFGSS) and K371 contribute to the ATP site. At S422 the chain carries Phosphoserine. Residues T442 and T496 each carry the phosphothreonine modification. Residue S517 is modified to Phosphoserine. T593 carries the phosphothreonine modification. 2 positions are modified to phosphoserine: S619 and S624.

It belongs to the protein kinase superfamily. Ser/Thr protein kinase family.

The protein resides in the cell membrane. Its function is as follows. Might be involved in early recognition of growth promoting fungi. Appears to be specific for P.indica. The protein is Probable inactive receptor kinase At5g16590 of Arabidopsis thaliana (Mouse-ear cress).